The following is a 309-amino-acid chain: MSGERAKRFPLALEDLKRAPRKSDGRAGERHAAIAAPKAADKPAAVPKPVALKPGVARMPPGTAAAKPATALKPTVPKPAMPKPIAANAAPAGAFALTSERVRERMVERLRANGVTDPRVLDAMAAVPRHLFVDAGLATQAYEDSALPIGHQQTISKPSVVARMIELAMAGRTLERVLEIGTGCGYQAAVLSHVARDVYSIERIKPLYERAKLNLRPLRVPNIRLHYGDGRVGLPSAAPFDAIVIAAAGLDVPQALLEQLAIGGRLVAPVGAQSGQPQVLTLIERVAHAQWRESRLDRVFFVPLKSGVI.

The segment at Met1–Val46 is disordered. A compositionally biased stretch (basic and acidic residues) spans Glu14 to Ala32. Over residues Ala33–Val46 the composition is skewed to low complexity. The active site involves Ser156.

Belongs to the methyltransferase superfamily. L-isoaspartyl/D-aspartyl protein methyltransferase family.

Its subcellular location is the cytoplasm. It carries out the reaction [protein]-L-isoaspartate + S-adenosyl-L-methionine = [protein]-L-isoaspartate alpha-methyl ester + S-adenosyl-L-homocysteine. Catalyzes the methyl esterification of L-isoaspartyl residues in peptides and proteins that result from spontaneous decomposition of normal L-aspartyl and L-asparaginyl residues. It plays a role in the repair and/or degradation of damaged proteins. The polypeptide is Protein-L-isoaspartate O-methyltransferase (Burkholderia vietnamiensis (strain G4 / LMG 22486) (Burkholderia cepacia (strain R1808))).